A 186-amino-acid chain; its full sequence is Pyridoxal 5'-phosphate synthase subunit PdxT (186 aa).

Position 46-48 (46-48 (GES)) interacts with L-glutamine. Cysteine 75 functions as the Nucleophile in the catalytic mechanism. Residues arginine 101 and 127 to 128 (IR) contribute to the L-glutamine site. Catalysis depends on charge relay system residues histidine 164 and glutamate 166.

It belongs to the glutaminase PdxT/SNO family. In terms of assembly, in the presence of PdxS, forms a dodecamer of heterodimers. Only shows activity in the heterodimer.

The catalysed reaction is aldehydo-D-ribose 5-phosphate + D-glyceraldehyde 3-phosphate + L-glutamine = pyridoxal 5'-phosphate + L-glutamate + phosphate + 3 H2O + H(+). The enzyme catalyses L-glutamine + H2O = L-glutamate + NH4(+). It participates in cofactor biosynthesis; pyridoxal 5'-phosphate biosynthesis. In terms of biological role, catalyzes the hydrolysis of glutamine to glutamate and ammonia as part of the biosynthesis of pyridoxal 5'-phosphate. The resulting ammonia molecule is channeled to the active site of PdxS. The sequence is that of Pyridoxal 5'-phosphate synthase subunit PdxT from Methanococcus aeolicus (strain ATCC BAA-1280 / DSM 17508 / OCM 812 / Nankai-3).